Here is a 149-residue protein sequence, read N- to C-terminus: Glycine cleavage system H protein (149 aa).

The region spanning 23-104 (LIWVGISNHA…PYGIWLFKIN (82 aa)) is the Lipoyl-binding domain. Lys64 carries the N6-lipoyllysine modification.

This sequence belongs to the GcvH family. In terms of assembly, the glycine cleavage system is composed of four proteins: P, T, L and H. (R)-lipoate is required as a cofactor.

The glycine cleavage system catalyzes the degradation of glycine. The H protein shuttles the methylamine group of glycine from the P protein to the T protein. In Polynucleobacter necessarius subsp. necessarius (strain STIR1), this protein is Glycine cleavage system H protein.